The following is a 962-amino-acid chain: Glycine dehydrogenase (decarboxylating) (962 aa).

The residue at position 709 (lysine 709) is an N6-(pyridoxal phosphate)lysine.

Belongs to the GcvP family. In terms of assembly, the glycine cleavage system is composed of four proteins: P, T, L and H. It depends on pyridoxal 5'-phosphate as a cofactor.

It catalyses the reaction N(6)-[(R)-lipoyl]-L-lysyl-[glycine-cleavage complex H protein] + glycine + H(+) = N(6)-[(R)-S(8)-aminomethyldihydrolipoyl]-L-lysyl-[glycine-cleavage complex H protein] + CO2. Functionally, the glycine cleavage system catalyzes the degradation of glycine. The P protein binds the alpha-amino group of glycine through its pyridoxal phosphate cofactor; CO(2) is released and the remaining methylamine moiety is then transferred to the lipoamide cofactor of the H protein. This chain is Glycine dehydrogenase (decarboxylating), found in Shewanella putrefaciens (strain CN-32 / ATCC BAA-453).